A 1247-amino-acid polypeptide reads, in one-letter code: SAM and SH3 domain-containing protein 1 (1247 aa).

A disordered region spans residues 1–39 (MEDAGAAGPGPEPEPEPEPEPEPAPEPEPEPKPGAGTSE). Over residues 13 to 28 (PEPEPEPEPEPAPEPE) the composition is skewed to acidic residues. Ser-90 bears the Phosphoserine mark. Disordered stretches follow at residues 126-145 (VERKNPLHKSNSEDSSVGKG), 221-257 (AALDPADWPDGSYPTFDGSSNCNSREQSDDETEESVK), and 316-344 (FFDGSPEKPPEDDSDSLTTSPSSSSLDTW). A Phosphoserine modification is found at Ser-248. Residues 331 to 343 (SLTTSPSSSSLDT) show a composition bias toward low complexity. The residue at position 407 (Ser-407) is a Phosphoserine. The segment at 449–573 (SLGKKVKSVK…DFTPSPYDTD (125 aa)) is disordered. Composition is skewed to low complexity over residues 468–484 (KYSSSVSEQDSGLDGMP) and 505–523 (GGSVESLRSSLSGQSSMSG). Positions 524–536 (QTVSTTDSSTSNR) are enriched in polar residues. The SH3 domain occupies 554-615 (PFCGRARVHT…KFIYVDVLSE (62 aa)). Phosphoserine is present on Ser-614. 2 disordered regions span residues 616–639 (DEEKPKRPTRRRRKGRPPQPKSVE) and 713–810 (DSQG…LNKN). The segment covering 622-631 (RPTRRRRKGR) has biased composition (basic residues). The SAM 1 domain maps to 633-697 (PQPKSVEDLL…LTAVELLQEY (65 aa)). Residues 746-765 (SAKSSTEPSLKSFSRNQLGN) are compositionally biased toward polar residues. 2 positions are modified to phosphoserine: Ser-821 and Ser-839. 3 disordered regions span residues 846–884 (EPGAEQDVPTEVTEPPPQIVPEVPQKTTASSTKAQPLEQ), 903–946 (PQKL…LART), and 971–1065 (DAEQ…SELP). A required for interaction with TRAF6 region spans residues 852-860 (DVPTEVTEP). Thr-858 is modified (phosphothreonine). Pro residues predominate over residues 1050-1060 (GSPPSTRPPPW). The SAM 2 domain maps to 1177-1241 (GCISSVSDWL…LSAARLFKLP (65 aa)).

Interacts with GNAS. Interacts with IQGAP1. Interacts with TRAF6 (via C-terminus); the interaction is LPS-dependent. Interacts with MAP3K7, CHUK and IKBKB. Expressed ubiquitously, with highest levels in lung, placenta, spleen and thymus. Down-regulated in the majority (74%) of breast tumors in comparison with corresponding normal breast epithelial tissues. Expressed in the epidermis, epidermal keratinocytes, dermal fibroblasts and melanocytes.

It localises to the cytoplasm. Functionally, is a positive regulator of NF-kappa-B signaling downstream of TLR4 activation. It acts as a scaffold molecule to assemble a molecular complex that includes TRAF6, MAP3K7, CHUK and IKBKB, thereby facilitating NF-kappa-B signaling activation. Regulates TRAF6 and MAP3K7 ubiquitination. Involved in the regulation of cell mobility. Regulates lipolysaccharide (LPS)-induced endothelial cell migration. Is involved in the regulation of skin pigmentation through the control of melanocyte migration in the epidermis. This chain is SAM and SH3 domain-containing protein 1 (SASH1), found in Homo sapiens (Human).